Consider the following 511-residue polypeptide: Pancreatic alpha-amylase (511 aa).

The N-terminal stretch at 1 to 15 (MKLFLLLSAFGFCWA) is a signal peptide. The residue at position 16 (Gln-16) is a Pyrrolidone carboxylic acid. Cystine bridges form between Cys-43/Cys-101, Cys-85/Cys-130, and Cys-156/Cys-175. Ca(2+)-binding residues include Asn-115, Arg-173, and Asp-182. Arg-210 is a binding site for chloride. The active-site Nucleophile is the Asp-212. His-216 contacts Ca(2+). Residue Glu-248 is the Proton donor of the active site. Positions 313 and 352 each coordinate chloride. A disulfide bridge connects residues Cys-393 and Cys-399. Residue Asn-427 is glycosylated (N-linked (GlcNAc...) asparagine). Cys-465 and Cys-477 are oxidised to a cystine.

It belongs to the glycosyl hydrolase 13 family. In terms of assembly, binds to the sea anemone inhibitor helianthamide and magnificamide. It depends on Ca(2+) as a cofactor. Chloride serves as cofactor.

The protein resides in the secreted. It is found in the extracellular space. It carries out the reaction Endohydrolysis of (1-&gt;4)-alpha-D-glucosidic linkages in polysaccharides containing three or more (1-&gt;4)-alpha-linked D-glucose units.. This Sus scrofa (Pig) protein is Pancreatic alpha-amylase (AMY2).